The primary structure comprises 532 residues: Alkaline phosphatase (532 aa).

Residues Met1–Ser20 are disordered. The chain crosses the membrane as a helical; Signal-anchor for type II membrane protein span at residues Trp27 to Phe47. Asp68 lines the Mg(2+) pocket. Asp68 provides a ligand contact to Zn(2+). Ser115 (phosphoserine intermediate) is an active-site residue. The Mg(2+) site is built by Asp166, Thr168, and Glu306. Residues Asp311, His315, Asp352, His353, and His456 each contribute to the Zn(2+) site.

Belongs to the alkaline phosphatase family. Requires Mg(2+) as cofactor. The cofactor is Zn(2+).

The protein localises to the membrane. It catalyses the reaction a phosphate monoester + H2O = an alcohol + phosphate. The polypeptide is Alkaline phosphatase (Schizosaccharomyces pombe (strain 972 / ATCC 24843) (Fission yeast)).